We begin with the raw amino-acid sequence, 732 residues long: Catalase-peroxidase (732 aa).

Residues 1–11 (MDAKTDDKDGG) are compositionally biased toward basic and acidic residues. Residues 1 to 24 (MDAKTDDKDGGKCPFPHGGGRGRR) form a disordered region. The segment at residues 97 to 219 (WHSAGTYRTT…LGAVQMGLIY (123 aa)) is a cross-link (tryptophyl-tyrosyl-methioninium (Trp-Tyr) (with M-245)). His-98 (proton acceptor) is an active-site residue. The segment at residues 219–245 (YVNPEGPNGNPDPVAAAKDIRETFARM) is a cross-link (tryptophyl-tyrosyl-methioninium (Tyr-Met) (with W-97)). His-260 lines the heme b pocket.

This sequence belongs to the peroxidase family. Peroxidase/catalase subfamily. As to quaternary structure, homodimer or homotetramer. It depends on heme b as a cofactor. In terms of processing, formation of the three residue Trp-Tyr-Met cross-link is important for the catalase, but not the peroxidase activity of the enzyme.

The enzyme catalyses H2O2 + AH2 = A + 2 H2O. The catalysed reaction is 2 H2O2 = O2 + 2 H2O. Its function is as follows. Bifunctional enzyme with both catalase and broad-spectrum peroxidase activity. This is Catalase-peroxidase from Rhodopseudomonas palustris (strain HaA2).